We begin with the raw amino-acid sequence, 456 residues long: Bifunctional protein GlmU (456 aa).

Positions 1–229 (MLNNAMSVVI…LSEVEGVNNR (229 aa)) are pyrophosphorylase. UDP-N-acetyl-alpha-D-glucosamine is bound by residues 11 to 14 (LAAG), Lys25, Gln76, 81 to 82 (GT), 103 to 105 (YGD), Gly140, Glu154, Asn169, and Asn227. Position 105 (Asp105) interacts with Mg(2+). Asn227 contributes to the Mg(2+) binding site. The linker stretch occupies residues 230 to 250 (LQLSRLERVYQSEQAEKLLLA). The segment at 251-456 (GVMLRDPARF…EGWRRPVKKK (206 aa)) is N-acetyltransferase. UDP-N-acetyl-alpha-D-glucosamine-binding residues include Arg333 and Lys351. The Proton acceptor role is filled by His363. Residues Tyr366 and Asn377 each contribute to the UDP-N-acetyl-alpha-D-glucosamine site. Acetyl-CoA-binding positions include Ala380, 386–387 (NY), Ser405, Ala423, and Arg440.

It in the N-terminal section; belongs to the N-acetylglucosamine-1-phosphate uridyltransferase family. The protein in the C-terminal section; belongs to the transferase hexapeptide repeat family. In terms of assembly, homotrimer. Requires Mg(2+) as cofactor.

The protein localises to the cytoplasm. The enzyme catalyses alpha-D-glucosamine 1-phosphate + acetyl-CoA = N-acetyl-alpha-D-glucosamine 1-phosphate + CoA + H(+). It catalyses the reaction N-acetyl-alpha-D-glucosamine 1-phosphate + UTP + H(+) = UDP-N-acetyl-alpha-D-glucosamine + diphosphate. The protein operates within nucleotide-sugar biosynthesis; UDP-N-acetyl-alpha-D-glucosamine biosynthesis; N-acetyl-alpha-D-glucosamine 1-phosphate from alpha-D-glucosamine 6-phosphate (route II): step 2/2. It functions in the pathway nucleotide-sugar biosynthesis; UDP-N-acetyl-alpha-D-glucosamine biosynthesis; UDP-N-acetyl-alpha-D-glucosamine from N-acetyl-alpha-D-glucosamine 1-phosphate: step 1/1. Its pathway is bacterial outer membrane biogenesis; LPS lipid A biosynthesis. Its function is as follows. Catalyzes the last two sequential reactions in the de novo biosynthetic pathway for UDP-N-acetylglucosamine (UDP-GlcNAc). The C-terminal domain catalyzes the transfer of acetyl group from acetyl coenzyme A to glucosamine-1-phosphate (GlcN-1-P) to produce N-acetylglucosamine-1-phosphate (GlcNAc-1-P), which is converted into UDP-GlcNAc by the transfer of uridine 5-monophosphate (from uridine 5-triphosphate), a reaction catalyzed by the N-terminal domain. In Shigella sonnei (strain Ss046), this protein is Bifunctional protein GlmU.